The following is a 364-amino-acid chain: Putative acetyl-CoA C-acetyltransferase YhfS (364 aa).

The active-site Acyl-thioester intermediate is Cys82. His318 serves as the catalytic Proton acceptor.

The protein belongs to the thiolase-like superfamily. Thiolase family.

May be involved in fatty acid metabolism. The sequence is that of Putative acetyl-CoA C-acetyltransferase YhfS (yhfS) from Bacillus subtilis (strain 168).